We begin with the raw amino-acid sequence, 420 residues long: Protein translocase subunit SecY (420 aa).

The next 10 membrane-spanning stretches (helical) occupy residues 9–29 (ILIT…PIPG), 61–81 (LSII…MELL), 104–124 (IVRY…SVGL), 141–161 (VFMI…MWIG), 173–193 (ISLI…SGTF), 203–223 (ILML…IIYV), 257–277 (LSGV…STIL), 300–320 (YNIL…SIVF), 355–375 (KLTL…WILV), and 377–397 (AMGV…QVAI).

It belongs to the SecY/SEC61-alpha family. In terms of assembly, component of the Sec protein translocase complex. Heterotrimer consisting of SecY, SecE and SecG subunits. The heterotrimers can form oligomers, although 1 heterotrimer is thought to be able to translocate proteins. Interacts with the ribosome. Interacts with SecDF, and other proteins may be involved. Interacts with SecA.

It is found in the cell inner membrane. Its function is as follows. The central subunit of the protein translocation channel SecYEG. Consists of two halves formed by TMs 1-5 and 6-10. These two domains form a lateral gate at the front which open onto the bilayer between TMs 2 and 7, and are clamped together by SecE at the back. The channel is closed by both a pore ring composed of hydrophobic SecY resides and a short helix (helix 2A) on the extracellular side of the membrane which forms a plug. The plug probably moves laterally to allow the channel to open. The ring and the pore may move independently. The sequence is that of Protein translocase subunit SecY from Helicobacter pylori (strain J99 / ATCC 700824) (Campylobacter pylori J99).